Consider the following 885-residue polypeptide: MDIRGRKMKKPPACVQCRKRKIGCDRVKPICGNCMKHNKMDCFYPDVPGQYVPSSSSSSNTRQVANGPYLNSYYASRRVSKETAALLQKNPELASLEQIREYNTRLQLLNAQNQLNNRSSAANATLNQQHTQYIPKSVPSLESKPVTSANESSTPLNWVQGPAIFHMLTSPYTQDEIINHEMNFLKGRLLELQEITGKKITGVNLDLKQDSSAQMQSSHSNRNQEEFLTIKKRKLSEDGVTDGDGKPIPESERRPHLNEFKDLDPQFLDTNKVFNVFNSAISEEGRNRLWLLPKNINKSSIFQIQYLIERDPFLFKFFNDLNILIETQFNGPLHDLVASRNSIERNSGISQILKFPSQSITQTLINKYLSTITETNSILPILKPKRLLPIVEQLFPSNTINKPNSKDFETIFQVFSVTNDQLLNLGFITLCLLILFESLNSTVLIPLRDDEHLQLFNVLFNYLPLLKSNLTTLRFEIEKRSMCNIETLRFISLWKYYQFVMDTSSSSSFVIDYDEDMHMACLLSLNHETQNQSHILTWNFIFKNYCWRHLFLGQLPLLMSEPFTNSTPIIDPLLNNDFELIDFEVNLMKYLQSKDQQLSIDKIIQLIKLLKNKNIEVSQGCLTTPSIINNIMDSLIYRNSMLYLNFYLLLQFETLKNYAKFNEILEDFLELSRETLFFVFSNLANIKFAGHEFTFINKSIVVLQTLVLMLLALYQRSFDSSKRTNDANEISEQTDIHSNNDNSKRIKNKNVIHLIINKIAMLLSDYTKNCKKQNKLIENLIIKIKTISKYIKNLEENKVTTSADSNYSINNGFSGISAEQLIKLNHELSKISESLIKTDFYEQRKNSTVSNGVLGAAAPVDSDANSDTFGLTKENFNEVFEAIRS.

Positions 14–42 form a DNA-binding region, zn(2)-C6 fungal-type; it reads CVQCRKRKIGCDRVKPICGNCMKHNKMDC. 2 positions are modified to phosphoserine: Ser-95 and Ser-236.

In terms of assembly, forms a heteromer with RSC30. Interacts with LDB7 and NPL6. Component of the two forms of the RSC complex composed of at least either RSC1 or RSC2, and ARP7, ARP9, LDB7, NPL6, RSC3, RSC30, RSC4, RSC58, RSC6, RSC8, RSC9, SFH1, STH1, HTL1 and probably RTT102. The complexes interact with histone and histone variant components of centromeric chromatin. Component of a fungal-specific module (HTL1-LDB7-NPL6-RSC3-RSC30) within the RSC complex.

It localises to the nucleus. Its function is as follows. Component of the chromatin structure-remodeling complex (RSC), which is involved in transcription regulation and nucleosome positioning. RSC is responsible for the transfer of a histone octamer from a nucleosome core particle to naked DNA. The reaction requires ATP and involves an activated RSC-nucleosome intermediate. Remodeling reaction also involves DNA translocation, DNA twist and conformational change. As a reconfigurer of centromeric and flanking nucleosomes, RSC complex is required both for proper kinetochore function in chromosome segregation and, via a PKC1-dependent signaling pathway, for organization of the cellular cytoskeleton. This subunit is required for transcription of ribosomal protein genes and genes involved in the integrity of the cell wall, and also for proper metaphase progression. Together with HTL1, LDB7, NPL6, RSC30 components, defines a fungal-specific module within the RSC complex that plays a role in many cellular functions including the maintenance of cell wall integrity. The sequence is that of Chromatin structure-remodeling complex protein RSC3 (RSC3) from Saccharomyces cerevisiae (strain ATCC 204508 / S288c) (Baker's yeast).